The primary structure comprises 390 residues: Glutamate 5-kinase (390 aa).

Lys29 contacts ATP. The substrate site is built by Ser69, Asp156, and Asn168. Position 188 to 189 (188 to 189 (TD)) interacts with ATP. Residues 295–374 (SGSLIVDAGA…EQFDRILGNN (80 aa)) form the PUA domain.

It belongs to the glutamate 5-kinase family.

Its subcellular location is the cytoplasm. The catalysed reaction is L-glutamate + ATP = L-glutamyl 5-phosphate + ADP. It participates in amino-acid biosynthesis; L-proline biosynthesis; L-glutamate 5-semialdehyde from L-glutamate: step 1/2. Functionally, catalyzes the transfer of a phosphate group to glutamate to form L-glutamate 5-phosphate. This is Glutamate 5-kinase from Psychrobacter cryohalolentis (strain ATCC BAA-1226 / DSM 17306 / VKM B-2378 / K5).